Here is a 331-residue protein sequence, read N- to C-terminus: uncharacterized protein (331 aa).

This sequence belongs to the IIV-6 335L family.

This is an uncharacterized protein from Invertebrate iridescent virus 6 (IIV-6).